The primary structure comprises 301 residues: Phosphoribosylaminoimidazole-succinocarboxamide synthase (301 aa).

This sequence belongs to the SAICAR synthetase family.

The enzyme catalyses 5-amino-1-(5-phospho-D-ribosyl)imidazole-4-carboxylate + L-aspartate + ATP = (2S)-2-[5-amino-1-(5-phospho-beta-D-ribosyl)imidazole-4-carboxamido]succinate + ADP + phosphate + 2 H(+). Its pathway is purine metabolism; IMP biosynthesis via de novo pathway; 5-amino-1-(5-phospho-D-ribosyl)imidazole-4-carboxamide from 5-amino-1-(5-phospho-D-ribosyl)imidazole-4-carboxylate: step 1/2. This chain is Phosphoribosylaminoimidazole-succinocarboxamide synthase, found in Syntrophobacter fumaroxidans (strain DSM 10017 / MPOB).